Reading from the N-terminus, the 320-residue chain is Methylenetetrahydrofolate dehydrogenase [NAD(+)] (320 aa).

The active site involves cysteine 152. NAD(+)-binding positions include 187–188 and 210–211; these read RS and DI.

It belongs to the tetrahydrofolate dehydrogenase/cyclohydrolase family. Homodimer.

The protein localises to the cytoplasm. It localises to the nucleus. It carries out the reaction (6R)-5,10-methylene-5,6,7,8-tetrahydrofolate + NAD(+) = (6R)-5,10-methenyltetrahydrofolate + NADH. The protein operates within one-carbon metabolism; tetrahydrofolate interconversion. Functionally, catalyzes oxidation of cytoplasmic one-carbon units for purine biosynthesis. The chain is Methylenetetrahydrofolate dehydrogenase [NAD(+)] (mtd1) from Schizosaccharomyces pombe (strain 972 / ATCC 24843) (Fission yeast).